The sequence spans 223 residues: Thiopurine S-methyltransferase (223 aa).

S-adenosyl-L-methionine-binding residues include Trp-10, Leu-45, Glu-66, and Arg-127.

It belongs to the class I-like SAM-binding methyltransferase superfamily. TPMT family.

Its subcellular location is the cytoplasm. The catalysed reaction is S-adenosyl-L-methionine + a thiopurine = S-adenosyl-L-homocysteine + a thiopurine S-methylether.. The polypeptide is Thiopurine S-methyltransferase (Shewanella woodyi (strain ATCC 51908 / MS32)).